The chain runs to 158 residues: Endoribonuclease YbeY (158 aa).

Residues His118, His122, and His128 each contribute to the Zn(2+) site.

It belongs to the endoribonuclease YbeY family. Requires Zn(2+) as cofactor.

Its subcellular location is the cytoplasm. Single strand-specific metallo-endoribonuclease involved in late-stage 70S ribosome quality control and in maturation of the 3' terminus of the 16S rRNA. This chain is Endoribonuclease YbeY, found in Alteromonas mediterranea (strain DSM 17117 / CIP 110805 / LMG 28347 / Deep ecotype).